The primary structure comprises 298 residues: Protein BZR1 homolog 1 (298 aa).

Disordered regions lie at residues 1 to 25 (MTSG…RRER), 71 to 129 (GTTY…SPSR), 153 to 175 (VSSS…PKIR), and 190 to 217 (AVSA…ESDV). The interval 10-91 (RTPTWKEREN…PSSAGGASVG (82 aa)) is required for DNA-binding. The segment covering 96 to 128 (SSTQLLSAPSSSFPSPVPSYHASPASSSFPSPS) has biased composition (low complexity). S156 bears the Phosphoserine mark. The PEST-like stretch occupies residues 204-224 (EHPDTIPECDESDVSTVDSGR).

This sequence belongs to the BZR/LAT61 family. In terms of assembly, interacts with GF14C. Interacts with PUB24. Interacts with SMOS1. Post-translationally, phosphorylated on serine and threonine residues by GSK2. Dephosphorylated during response to brassinosteroid. Ubiquitinated by PUB24. Ubiquitination leads to its subsequent degradation by the 26S proteasome, thus reducing sensitivity to brassinosteroid signaling.

The protein localises to the nucleus. Its subcellular location is the cytoplasm. Functionally, positive brassinosteroid-signaling protein. Mediates downstream brassinosteroid-regulated growth response and feedback inhibition of brassinosteroid (BR) biosynthetic genes. May act as transcriptional repressor by binding the brassinosteroid-response element (BREE) (5'-CGTG(T/C)G-3') in the promoter of DLT (AC Q9LWU9), another positive regulator of BR signaling. Acts as a transcriptional repressor of LIC, a negative regulator of BR signaling, by binding to the BRRE element of its promoter. BZR1 and LIC play opposite roles in BR signaling and regulation of leaf bending. The polypeptide is Protein BZR1 homolog 1 (Oryza sativa subsp. japonica (Rice)).